The chain runs to 500 residues: Phenylalanine--tRNA ligase alpha subunit (500 aa).

L-phenylalanine is bound by residues threonine 343, 382–384, and phenylalanine 423; that span reads QVD. A Mg(2+)-binding site is contributed by glutamate 425. Phenylalanine 448 provides a ligand contact to L-phenylalanine.

It belongs to the class-II aminoacyl-tRNA synthetase family. Phe-tRNA synthetase alpha subunit type 2 subfamily. As to quaternary structure, tetramer of two alpha and two beta subunits. The cofactor is Mg(2+).

It is found in the cytoplasm. The enzyme catalyses tRNA(Phe) + L-phenylalanine + ATP = L-phenylalanyl-tRNA(Phe) + AMP + diphosphate + H(+). This chain is Phenylalanine--tRNA ligase alpha subunit, found in Thermococcus onnurineus (strain NA1).